Consider the following 665-residue polypeptide: Lamin-A (665 aa).

M1 is modified (N-acetylmethionine). The segment at 1–29 is head; sequence METPGQKRATRSTHTPLSPTRITRLQEKE. Residue S18 is modified to Phosphoserine. The region spanning 27–383 is the IF rod domain; that stretch reads EKEDLQGLND…KLLEGEEERL (357 aa). A coil 1A region spans residues 30–66; it reads DLQGLNDRLAVYIDKVRSLELENARLRLRITESEDVI. The linker 1 stretch occupies residues 67–76; sequence SREVTGIKSA. The interval 77–214 is coil 1B; sequence YETELADARK…SIYNEEMRET (138 aa). A linker 2 region spans residues 215-238; sequence KRRHETRLVEVDNGRQREFESKLA. A coil 2 region spans residues 239 to 383; it reads DALHELRAQH…KLLEGEEERL (145 aa). Disordered stretches follow at residues 381 to 441, 550 to 581, and 602 to 641; these read ERLR…SVEE, DDEDNDDMEHHHHHHHHHHDGQNSSGDPGEYN, and ASQGSGLVTGSSGSSSSSVTLTRTYRSTGGTSGGSGLGES. The tail stretch occupies residues 384-664; sequence RLSPSPNTQK…AQVAPQNCSI (281 aa). S388 carries the phosphoserine modification. Over residues 399–411 the composition is skewed to low complexity; the sequence is IASHSGAHISSSA. Positions 413 to 418 match the Nuclear localization signal motif; it reads KRRRLE. Residues 425 to 542 form the LTD domain; that stretch reads SSFTQHARTT…EEVAMRKLVR (118 aa). Polar residues predominate over residues 427 to 436; sequence FTQHARTTGK. Residues 605–630 are compositionally biased toward low complexity; the sequence is GSGLVTGSSGSSSSSVTLTRTYRSTG. At C662 the chain carries Cysteine methyl ester. C662 carries the S-farnesyl cysteine lipid modification. Positions 663-665 are cleaved as a propeptide — removed in mature form; sequence SIM.

It belongs to the intermediate filament family. Homodimer. Lamin dimers then assemble into dimeric head-to-tail polymers. Ultimately, two head-to-tail polymers assemble laterally into a protofilament with a uniformly shaped rod of 3.5 nm in diameter. In terms of processing, phosphorylation plays a key role in lamin organization, subcellular localization and nuclear envelope disintegration. Phosphorylation by CDK1 at Ser-18 at the onset of mitosis drives lamin disassembly and nuclear envelope breakdown.

The protein resides in the nucleus lamina. It is found in the nucleus envelope. Its subcellular location is the nucleus. The protein localises to the nucleoplasm. It localises to the nucleus matrix. In terms of biological role, lamins are intermediate filament proteins that assemble into a filamentous meshwork, and which constitute the major components of the nuclear lamina, a fibrous layer on the nucleoplasmic side of the inner nuclear membrane. Lamins provide a framework for the nuclear envelope, bridging the nuclear envelope and chromatin, thereby playing an important role in nuclear assembly, chromatin organization, nuclear membrane and telomere dynamics. The structural integrity of the lamina is strictly controlled by the cell cycle, as seen by the disintegration and formation of the nuclear envelope in prophase and telophase, respectively. The sequence is that of Lamin-A (lmna) from Xenopus laevis (African clawed frog).